The following is a 440-amino-acid chain: MSQQKPHINLVVIGHVDHGKSTLVGHLLYRLGFVDEKTIKMLEEEAKKKGKESFKYAWLLDRLKEERERGVTIDLTFVKFETKKYYFTIIDAPGHRDFVKNMITGASQADAAILVVSARRGEFEAGMSAEGQTREHLILAKTMGIDQLIVAVNKMDATEPPYSKQRYEQIVAFLKKFMKSLGYKVDQIPFIPVSAWTGENLIERSPNMPWYNGPTLVEALDTYIQPPKKPVDKPLRIPIQNVYSIPGVGTVPVGRVETGVLKVGDKVVFMPPGVVGEVRSIEMHHQPLQQAEPGDNIGFNVRGISKKDIRRGDVAGHVDKPPTVAEEFTARIFVIWHPSAITVGYTPVIHAHTASIAARITEIQAKLDPRTGQVIEKNPQFLKAGDAAIVKFKPIKPMVIEKYSEFPQLGRFAMRDMGKTIGIGIVVDVKPAKVEIRAKK.

The tr-type G domain maps to 5-228 (KPHINLVVIG…ALDTYIQPPK (224 aa)). Residues 14–21 (GHVDHGKS) are G1. 14 to 21 (GHVDHGKS) contributes to the GTP binding site. A Mg(2+)-binding site is contributed by Ser-21. Positions 70 to 74 (GVTID) are G2. The interval 91–94 (DAPG) is G3. Residues 91 to 95 (DAPGH) and 153 to 156 (NKMD) each bind GTP. The tract at residues 153 to 156 (NKMD) is G4. Residues 194-196 (SAW) are G5.

Belongs to the TRAFAC class translation factor GTPase superfamily. Classic translation factor GTPase family. EF-Tu/EF-1A subfamily.

The protein resides in the cytoplasm. The catalysed reaction is GTP + H2O = GDP + phosphate + H(+). In terms of biological role, GTP hydrolase that promotes the GTP-dependent binding of aminoacyl-tRNA to the A-site of ribosomes during protein biosynthesis. This Hyperthermus butylicus (strain DSM 5456 / JCM 9403 / PLM1-5) protein is Elongation factor 1-alpha.